A 242-amino-acid chain; its full sequence is NADH-quinone oxidoreductase subunit C (242 aa).

The insert stretch occupies residues 67–101 (VVNSVGLGHKEQGAKPITNRRTTSDNVGESKSIDY).

Belongs to the complex I 30 kDa subunit family. NDH-1 is composed of 14 different subunits. Subunits NuoB, C, D, E, F, and G constitute the peripheral sector of the complex.

Its subcellular location is the cell inner membrane. It catalyses the reaction a quinone + NADH + 5 H(+)(in) = a quinol + NAD(+) + 4 H(+)(out). NDH-1 shuttles electrons from NADH, via FMN and iron-sulfur (Fe-S) centers, to quinones in the respiratory chain. The immediate electron acceptor for the enzyme in this species is believed to be ubiquinone. Couples the redox reaction to proton translocation (for every two electrons transferred, four hydrogen ions are translocated across the cytoplasmic membrane), and thus conserves the redox energy in a proton gradient. The sequence is that of NADH-quinone oxidoreductase subunit C from Rickettsia conorii (strain ATCC VR-613 / Malish 7).